The following is a 312-amino-acid chain: GATA transcription factor 6 (312 aa).

Disordered stretches follow at residues Met-1 to Leu-33, Gln-56 to Asp-77, and Lys-136 to Leu-186. Residues Gln-56 to Asn-71 show a composition bias toward basic and acidic residues. The segment covering Val-142 to Thr-151 has biased composition (basic residues). The Nuclear localization signal signature appears at Lys-143–Arg-150. Residues Ser-157 to Leu-186 are compositionally biased toward low complexity. The GATA-type zinc finger occupies Gln-217–Ser-271.

Belongs to the type IV zinc-finger family. Class A subfamily.

It is found in the nucleus. In terms of biological role, transcriptional activator that specifically binds 5'-GATA-3' or 5'-GAT-3' motifs within gene promoters. May be involved in the regulation of some light-responsive genes. This is GATA transcription factor 6 (GATA6) from Arabidopsis thaliana (Mouse-ear cress).